The sequence spans 151 residues: Large ribosomal subunit protein uL13 (151 aa).

Belongs to the universal ribosomal protein uL13 family. Part of the 50S ribosomal subunit.

This protein is one of the early assembly proteins of the 50S ribosomal subunit, although it is not seen to bind rRNA by itself. It is important during the early stages of 50S assembly. The chain is Large ribosomal subunit protein uL13 from Nostoc sp. (strain PCC 7120 / SAG 25.82 / UTEX 2576).